A 463-amino-acid polypeptide reads, in one-letter code: Cysteine--tRNA ligase (463 aa).

Cys28 serves as a coordination point for Zn(2+). The 'HIGH' region signature appears at 30–40 (ITIYDLCHIGH). The Zn(2+) site is built by Cys209, His234, and Glu238. The short motif at 266-270 (KMSKS) is the 'KMSKS' region element. Position 269 (Lys269) interacts with ATP.

The protein belongs to the class-I aminoacyl-tRNA synthetase family. As to quaternary structure, monomer. Zn(2+) serves as cofactor.

The protein localises to the cytoplasm. It carries out the reaction tRNA(Cys) + L-cysteine + ATP = L-cysteinyl-tRNA(Cys) + AMP + diphosphate. In Proteus mirabilis (strain HI4320), this protein is Cysteine--tRNA ligase.